The chain runs to 345 residues: MGSSGDDGYRLLNEYTNGFMVSQVLFAACELGVFDLLAEAPGPLDVAAVAAGVEASSHGTELLLDTCVSLKLLKVETRAGKAFYQNTELSSAYLTRVSPTSQCNLLKYMGRTSYGCWGHLADAVREGKNQYLQTFGVPAEDLFKAIYRSEGERLQFMQALQEVWSVNGRSVLTAFDLSGFPLMCDLGGGPGALAKECLSLYPGCKVTVFDVPEVVRTAKQHFSFPEEEEIHLQEGDFFKDPLPEADLYILARILHDWADGKCSHLLERVYHTCKPGGGILVIESLLDEDRRGPLLTQLYSLNMLVQTEGQERTPTHYHMLLSSAGFRDFQFKKTGAIYDAILVRK.

S-adenosyl-L-methionine-binding positions include Y147, W164, D210, 235-237 (GDF), and R252. Residue H255 is the Proton donor/acceptor of the active site. 3 residues coordinate substrate: D256, N302, and Q306.

It belongs to the class I-like SAM-binding methyltransferase superfamily. Cation-independent O-methyltransferase family. As to quaternary structure, homodimer. As to expression, highly expressed in pineal gland. In the retina, 10- to 100-fold lower expression compared to pineal gland, if any.

The catalysed reaction is N-acetylserotonin + S-adenosyl-L-methionine = melatonin + S-adenosyl-L-homocysteine + H(+). It participates in aromatic compound metabolism; melatonin biosynthesis; melatonin from serotonin: step 1/2. In terms of biological role, catalyzes the transfer of a methyl group onto N-acetylserotonin, producing melatonin (N-acetyl-5-methoxytryptamine). The polypeptide is Acetylserotonin O-methyltransferase (ASMT) (Macaca mulatta (Rhesus macaque)).